The chain runs to 367 residues: Queuine tRNA-ribosyltransferase (367 aa).

Catalysis depends on Asp-92, which acts as the Proton acceptor. Substrate-binding positions include 92–96 (DSGGF), Asp-146, Gln-188, and Gly-215. The RNA binding stretch occupies residues 246–252 (GVGTPKD). Asp-265 (nucleophile) is an active-site residue. Residues Cys-303, Cys-305, Cys-308, and His-334 each coordinate Zn(2+).

Belongs to the queuine tRNA-ribosyltransferase family. Homodimer. Within each dimer, one monomer is responsible for RNA recognition and catalysis, while the other monomer binds to the replacement base PreQ1. Zn(2+) is required as a cofactor.

The enzyme catalyses 7-aminomethyl-7-carbaguanine + guanosine(34) in tRNA = 7-aminomethyl-7-carbaguanosine(34) in tRNA + guanine. It participates in tRNA modification; tRNA-queuosine biosynthesis. Its function is as follows. Catalyzes the base-exchange of a guanine (G) residue with the queuine precursor 7-aminomethyl-7-deazaguanine (PreQ1) at position 34 (anticodon wobble position) in tRNAs with GU(N) anticodons (tRNA-Asp, -Asn, -His and -Tyr). Catalysis occurs through a double-displacement mechanism. The nucleophile active site attacks the C1' of nucleotide 34 to detach the guanine base from the RNA, forming a covalent enzyme-RNA intermediate. The proton acceptor active site deprotonates the incoming PreQ1, allowing a nucleophilic attack on the C1' of the ribose to form the product. After dissociation, two additional enzymatic reactions on the tRNA convert PreQ1 to queuine (Q), resulting in the hypermodified nucleoside queuosine (7-(((4,5-cis-dihydroxy-2-cyclopenten-1-yl)amino)methyl)-7-deazaguanosine). The protein is Queuine tRNA-ribosyltransferase of Francisella tularensis subsp. holarctica (strain FTNF002-00 / FTA).